A 262-amino-acid chain; its full sequence is DNA-directed RNA polymerase subunit Rpo3 (262 aa).

This sequence belongs to the archaeal Rpo3/eukaryotic RPB3 RNA polymerase subunit family. In terms of assembly, part of the RNA polymerase complex.

Its subcellular location is the cytoplasm. It catalyses the reaction RNA(n) + a ribonucleoside 5'-triphosphate = RNA(n+1) + diphosphate. DNA-dependent RNA polymerase (RNAP) catalyzes the transcription of DNA into RNA using the four ribonucleoside triphosphates as substrates. The sequence is that of DNA-directed RNA polymerase subunit Rpo3 from Pyrobaculum islandicum (strain DSM 4184 / JCM 9189 / GEO3).